Reading from the N-terminus, the 118-residue chain is Small ribosomal subunit protein eS10 (118 aa).

The segment at 91–118 is disordered; that stretch reads RLKNAPAERPRPSRGGPRRGGYRGRARD. Over residues 106 to 118 the composition is skewed to basic residues; sequence GPRRGGYRGRARD.

It belongs to the eukaryotic ribosomal protein eS10 family. As to quaternary structure, component of the small ribosomal subunit. Mature ribosomes consist of a small (40S) and a large (60S) subunit. The 40S subunit contains about 32 different proteins and 1 molecule of RNA (18S). The 60S subunit contains 45 different proteins and 3 molecules of RNA (25S, 5.8S and 5S).

The protein localises to the cytoplasm. In terms of biological role, component of the ribosome, a large ribonucleoprotein complex responsible for the synthesis of proteins in the cell. The small ribosomal subunit (SSU) binds messenger RNAs (mRNAs) and translates the encoded message by selecting cognate aminoacyl-transfer RNA (tRNA) molecules. The large subunit (LSU) contains the ribosomal catalytic site termed the peptidyl transferase center (PTC), which catalyzes the formation of peptide bonds, thereby polymerizing the amino acids delivered by tRNAs into a polypeptide chain. The nascent polypeptides leave the ribosome through a tunnel in the LSU and interact with protein factors that function in enzymatic processing, targeting, and the membrane insertion of nascent chains at the exit of the ribosomal tunnel. In Candida albicans (strain SC5314 / ATCC MYA-2876) (Yeast), this protein is Small ribosomal subunit protein eS10 (RPS10).